Reading from the N-terminus, the 385-residue chain is Arginine biosynthesis bifunctional protein ArgJ (385 aa).

Substrate contacts are provided by Thr142, Lys168, Thr179, Glu259, Asn380, and Thr385. Thr179 (nucleophile) is an active-site residue.

This sequence belongs to the ArgJ family. In terms of assembly, heterotetramer of two alpha and two beta chains.

The protein localises to the cytoplasm. The enzyme catalyses N(2)-acetyl-L-ornithine + L-glutamate = N-acetyl-L-glutamate + L-ornithine. It catalyses the reaction L-glutamate + acetyl-CoA = N-acetyl-L-glutamate + CoA + H(+). The protein operates within amino-acid biosynthesis; L-arginine biosynthesis; L-ornithine and N-acetyl-L-glutamate from L-glutamate and N(2)-acetyl-L-ornithine (cyclic): step 1/1. Its pathway is amino-acid biosynthesis; L-arginine biosynthesis; N(2)-acetyl-L-ornithine from L-glutamate: step 1/4. Functionally, catalyzes two activities which are involved in the cyclic version of arginine biosynthesis: the synthesis of N-acetylglutamate from glutamate and acetyl-CoA as the acetyl donor, and of ornithine by transacetylation between N(2)-acetylornithine and glutamate. This chain is Arginine biosynthesis bifunctional protein ArgJ, found in Leptospira interrogans serogroup Icterohaemorrhagiae serovar Lai (strain 56601).